We begin with the raw amino-acid sequence, 185 residues long: Ribosome-recycling factor (185 aa).

Positions 138 to 160 are disordered; the sequence is AMDKAVKDGEVGEDEGARGEKEL.

It belongs to the RRF family.

The protein resides in the cytoplasm. Responsible for the release of ribosomes from messenger RNA at the termination of protein biosynthesis. May increase the efficiency of translation by recycling ribosomes from one round of translation to another. This is Ribosome-recycling factor from Micrococcus luteus (strain ATCC 4698 / DSM 20030 / JCM 1464 / CCM 169 / CCUG 5858 / IAM 1056 / NBRC 3333 / NCIMB 9278 / NCTC 2665 / VKM Ac-2230) (Micrococcus lysodeikticus).